The primary structure comprises 612 residues: Arginine--tRNA ligase (612 aa).

The 'HIGH' region motif lies at 152–162; it reads PNIAKEMHVGH.

It belongs to the class-I aminoacyl-tRNA synthetase family. As to quaternary structure, monomer.

Its subcellular location is the cytoplasm. It catalyses the reaction tRNA(Arg) + L-arginine + ATP = L-arginyl-tRNA(Arg) + AMP + diphosphate. The sequence is that of Arginine--tRNA ligase from Prochlorococcus marinus (strain MIT 9313).